The sequence spans 514 residues: 3-octaprenyl-4-hydroxybenzoate carboxy-lyase (514 aa).

Mn(2+) is bound at residue asparagine 177. Prenylated FMN is bound by residues 180-182 (IYR), 194-196 (RWL), and 199-200 (RG). Mn(2+) is bound at residue glutamate 243. Aspartate 314 serves as the catalytic Proton donor.

The protein belongs to the UbiD family. As to quaternary structure, homohexamer. Prenylated FMN is required as a cofactor. Mn(2+) serves as cofactor.

The protein localises to the cell membrane. The catalysed reaction is a 4-hydroxy-3-(all-trans-polyprenyl)benzoate + H(+) = a 2-(all-trans-polyprenyl)phenol + CO2. It participates in cofactor biosynthesis; ubiquinone biosynthesis. In terms of biological role, catalyzes the decarboxylation of 3-octaprenyl-4-hydroxy benzoate to 2-octaprenylphenol, an intermediate step in ubiquinone biosynthesis. This Bordetella petrii (strain ATCC BAA-461 / DSM 12804 / CCUG 43448) protein is 3-octaprenyl-4-hydroxybenzoate carboxy-lyase.